Here is a 521-residue protein sequence, read N- to C-terminus: Aldehyde dehydrogenase, mitochondrial (521 aa).

The N-terminal 21 residues, 1-21 (MLRPAALAAARLVLRQGRRLL), are a transit peptide targeting the mitochondrion. The SIFI-degron motif lies at 13–28 (VLRQGRRLLSAAPTQA). Residues lysine 56, lysine 77, and lysine 163 each carry the N6-acetyllysine modification. 266-271 (GSTEVG) contacts NAD(+). Catalysis depends on glutamate 289, which acts as the Proton acceptor. Cysteine 323 (nucleophile) is an active-site residue. N6-acetyllysine occurs at positions 372, 379, 387, 430, 432, 445, and 455.

It belongs to the aldehyde dehydrogenase family. In terms of assembly, homotetramer. In terms of processing, in response to mitochondrial stress, the precursor protein is ubiquitinated by the SIFI complex in the cytoplasm before mitochondrial import, leading to its degradation. Within the SIFI complex, UBR4 initiates ubiquitin chain that are further elongated or branched by KCMF1.

The protein localises to the mitochondrion matrix. The catalysed reaction is an aldehyde + NAD(+) + H2O = a carboxylate + NADH + 2 H(+). It participates in alcohol metabolism; ethanol degradation; acetate from ethanol: step 2/2. Required for clearance of cellular formaldehyde, a cytotoxic and carcinogenic metabolite that induces DNA damage. This is Aldehyde dehydrogenase, mitochondrial (ALDH2) from Sus scrofa (Pig).